The chain runs to 124 residues: Protein MGF 110-4L-B (124 aa).

Residues 1 to 18 form the signal peptide; sequence MLVIFLGILGLLANQVLG. Asn64 is a glycosylation site (N-linked (GlcNAc...) asparagine; by host). A Prevents secretion from ER motif is present at residues 121-124; sequence KEDL.

It belongs to the asfivirus MGF 110 family.

The protein localises to the virion. The protein resides in the host endoplasmic reticulum-Golgi intermediate compartment. Causes the redistribution of lumenal ER protein to an enlarged ERGIC compartment. In African swine fever virus (isolate Portugal/Lis 57/1957) (ASFV), this protein is Protein MGF 110-4L-B.